We begin with the raw amino-acid sequence, 588 residues long: MEVKANQAKETKKGVLKRIAGPVVTAVNLDAHMYDVVRVGNEALMGEVIKIQGDNVIIQVYEDTTGIKPGEPVSNTGLSLAVELGPGLLTSIYDGIQRPLEVLVNKMGNFIERGVSAPGLSHEKKWTFKPVVKAGDKVEPGAILGEVQETNIVHKVMLPPNVKAGVVKTIKAGDFTVDEIIVILEDGREYPMIQRWPVRVPRPVKEKKNPTIPLLTGQRILDGLFPIAKGGTAAIPGPFGSGKTVTQQQLAKWSDAKIVVYIGCGERGNEMTEVLTEFPHLEDPTSGKPLMERTVLIANTSNMPVAAREASVYTGITIAEYFRDMGYDVSLMADSTSRWAEAMREISSRLEEMPGEEGYPAYLAARLSEFYERAGLVETLNHQSGSVSVIGAVSPPGGDFSEPVTQNTLRIVKVFWALDAKLSQRRHFPAINWLNSYSLYLDALHDWYDKNVSPDWNKLRSWAMGVLQKEAELQEIVQLVGSDALPETEQITIEVARMIREIFLQQNAYDAVDTFCDMQKQYDMMKAIRLYSDLANTAQAAGVSPAQITTIKAKNELPQIKFVKDYKQPLAKIEKDMDAEFNALRSAA.

Residue 237-244 (GPFGSGKT) coordinates ATP.

This sequence belongs to the ATPase alpha/beta chains family. In terms of assembly, has multiple subunits with at least A(3), B(3), C, D, E, F, H, I and proteolipid K(x).

Its subcellular location is the cell membrane. It catalyses the reaction ATP + H2O + 4 H(+)(in) = ADP + phosphate + 5 H(+)(out). Its function is as follows. Component of the A-type ATP synthase that produces ATP from ADP in the presence of a proton gradient across the membrane. The A chain is the catalytic subunit. This is A-type ATP synthase subunit A from Methanoregula boonei (strain DSM 21154 / JCM 14090 / 6A8).